The following is a 166-amino-acid chain: Large ribosomal subunit protein eL14 (166 aa).

A disordered region spans residues 135–166; the sequence is KADGTPRVLKKDRRERLRAEKAKGGKKAAAKK. Over residues 146–157 the composition is skewed to basic and acidic residues; sequence DRRERLRAEKAK.

It belongs to the eukaryotic ribosomal protein eL14 family.

This is Large ribosomal subunit protein eL14 (RpL14) from Drosophila melanogaster (Fruit fly).